Reading from the N-terminus, the 650-residue chain is Putative lipase atg15 (650 aa).

Residues 1 to 11 lie on the Cytoplasmic side of the membrane; that stretch reads MKSSRKRTKRR. The helical; Signal-anchor for type II membrane protein transmembrane segment at 12-32 threads the bilayer; that stretch reads VLQDMSISGLLLSVALLPSVV. The Lumenal segment spans residues 33–650; that stretch reads SAQDHVYLDP…CVGSTGTELR (618 aa). N-linked (GlcNAc...) asparagine glycosylation is found at asparagine 165, asparagine 200, asparagine 222, asparagine 280, and asparagine 304. Serine 320 acts as the Charge relay system in catalysis. N-linked (GlcNAc...) asparagine glycosylation is present at asparagine 466.

It belongs to the AB hydrolase superfamily. Lipase family. Binds to both phosphatidylinositol (PI) and phosphatidylinositol 3,5-bisphosphate (PIP2).

Its subcellular location is the endosome. The protein resides in the multivesicular body membrane. The protein localises to the prevacuolar compartment membrane. It carries out the reaction a triacylglycerol + H2O = a diacylglycerol + a fatty acid + H(+). In terms of biological role, lipase which is essential for lysis of subvacuolar cytoplasm to vacuole targeted bodies and intravacuolar autophagic bodies. Involved in the lysis of intravacuolar multivesicular body (MVB) vesicles. The intravacuolar membrane disintegration by atg15 is critical to life span extension. The polypeptide is Putative lipase atg15 (atg15) (Aspergillus fumigatus (strain ATCC MYA-4609 / CBS 101355 / FGSC A1100 / Af293) (Neosartorya fumigata)).